Consider the following 513-residue polypeptide: Probable DNA primase large subunit (513 aa).

[4Fe-4S] cluster contacts are provided by Cys-315, Cys-398, Cys-415, and Cys-457.

It belongs to the eukaryotic-type primase large subunit family. As to quaternary structure, heterodimer of a small subunit and a large subunit. [4Fe-4S] cluster is required as a cofactor.

In terms of biological role, DNA primase is the polymerase that synthesizes small RNA primers for the Okazaki fragments made during discontinuous DNA replication. The protein is Probable DNA primase large subunit of Neurospora crassa (strain ATCC 24698 / 74-OR23-1A / CBS 708.71 / DSM 1257 / FGSC 987).